Consider the following 710-residue polypeptide: Ephexin-1 (710 aa).

Basic and acidic residues-rich tracts occupy residues 1–11 and 26–41; these read METRESEDLEK and EPAK…KEET. The interval 1–143 is disordered; the sequence is METRESEDLE…PGNGATPEEW (143 aa). Residues 1 to 273 form a regulatory region; modulates activity toward RHOA, RAC1 and CDC42 region; that stretch reads METRESEDLE…LEILQPEEIK (273 aa). Composition is skewed to polar residues over residues 89 to 102 and 127 to 136; these read ADSQ…NEPL and MSESSSTPGN. Tyr179 bears the Phosphotyrosine mark. The interval 194–236 is disordered; the sequence is RRQQDAEIEDNTNGSPASEDTPEEEEEEEEEEEPASPPERKTL. Positions 213–227 are enriched in acidic residues; sequence DTPEEEEEEEEEEEP. The region spanning 273-457 is the DH domain; that stretch reads KLQEAMFELV…EMVVKACNEG (185 aa). The region spanning 489 to 601 is the PH domain; it reads WLLKQGELQQ…WMTSLAPNRR (113 aa). In terms of domain architecture, SH3 spans 612 to 673; it reads LDCPQVQCVH…PSSMTEEILN (62 aa). A compositionally biased stretch (basic and acidic residues) spans 687 to 699; it reads VHKMDDPQRSQNK. Residues 687–710 form a disordered region; that stretch reads VHKMDDPQRSQNKDRRKLGSRNRQ. Residues 700–710 show a composition bias toward basic residues; that stretch reads DRRKLGSRNRQ.

Interacts with CDK5R1 and EPHA4; activated by EPHA4 through the CDK5 kinase. In terms of processing, src-dependent phosphorylation at Tyr-179 upon EPHA4 activation increases the guanine exchange factor activity toward RHOA. Phosphorylation by CDK5 upon EPHA4 activation by EFNA1 may regulate dendritic spine morphogenesis. In terms of tissue distribution, highly expressed in brain specifically in caudate nucleus and to a lower extent in amygdala and hippocampus. Also detected in lung.

The protein localises to the cytoplasm. It localises to the membrane. Its subcellular location is the cell projection. It is found in the growth cone. Acts as a guanine nucleotide exchange factor (GEF) which differentially activates the GTPases RHOA, RAC1 and CDC42. Plays a role in axon guidance regulating ephrin-induced growth cone collapse and dendritic spine morphogenesis. Upon activation by ephrin through EPHA4, the GEF activity switches toward RHOA resulting in its activation. Activated RHOA promotes cone retraction at the expense of RAC1- and CDC42-stimulated growth cone extension. This is Ephexin-1 (NGEF) from Homo sapiens (Human).